Reading from the N-terminus, the 420-residue chain is Glyceraldehyde-3-phosphate dehydrogenase GAPCP2, chloroplastic (420 aa).

A chloroplast-targeting transit peptide spans 1–66; the sequence is MALSSLLRSA…YNAKRVQPIK (66 aa). Residues 94 to 95, D116, and R162 each bind NAD(+); that span reads RI. Residues 233 to 235, T264, 293 to 294, and R316 contribute to the D-glyceraldehyde 3-phosphate site; these read SCT and TG. The active-site Nucleophile is the C234. N398 provides a ligand contact to NAD(+).

It belongs to the glyceraldehyde-3-phosphate dehydrogenase family. As to quaternary structure, homotetramer. Expressed in shoot and root vasculature, leaf veins and vascular tissue of flowers and siliques.

Its subcellular location is the plastid. It localises to the chloroplast stroma. It carries out the reaction D-glyceraldehyde 3-phosphate + phosphate + NAD(+) = (2R)-3-phospho-glyceroyl phosphate + NADH + H(+). Functionally, involved in plastidial glycolytic pathway and plays a specific role in glycolytic energy production in non-green plastids and chloroplasts. Essential for breakdown of starch to form sucrose for export to non-photosynthetic tissues, and to generate primary metabolites for anabolic pathways such as fatty acid and amino acid synthesis. Plays an important role in plant development by providing substrates for the phosphorylated pathway of serine biosynthesis in roots. Plays a crucial role in pollen development. Functionally redundant with GAPCP1. The polypeptide is Glyceraldehyde-3-phosphate dehydrogenase GAPCP2, chloroplastic (GAPCP2) (Arabidopsis thaliana (Mouse-ear cress)).